We begin with the raw amino-acid sequence, 470 residues long: Sulfate adenylyltransferase subunit 1 (470 aa).

The tr-type G domain maps to 22–238 (KELLRFITCG…ETIKIDYAYT (217 aa)). The segment at 31-38 (GSVDDGKS) is G1. 31–38 (GSVDDGKS) serves as a coordination point for GTP. The G2 stretch occupies residues 89-93 (GITID). The tract at residues 110–113 (DTPG) is G3. GTP contacts are provided by residues 110–114 (DTPGH) and 165–168 (NKMD). The segment at 165–168 (NKMD) is G4. A G5 region spans residues 202–204 (SAL).

The protein belongs to the TRAFAC class translation factor GTPase superfamily. Classic translation factor GTPase family. CysN/NodQ subfamily. As to quaternary structure, heterodimer composed of CysD, the smaller subunit, and CysN.

It catalyses the reaction sulfate + ATP + H(+) = adenosine 5'-phosphosulfate + diphosphate. It functions in the pathway sulfur metabolism; hydrogen sulfide biosynthesis; sulfite from sulfate: step 1/3. With CysD forms the ATP sulfurylase (ATPS) that catalyzes the adenylation of sulfate producing adenosine 5'-phosphosulfate (APS) and diphosphate, the first enzymatic step in sulfur assimilation pathway. APS synthesis involves the formation of a high-energy phosphoric-sulfuric acid anhydride bond driven by GTP hydrolysis by CysN coupled to ATP hydrolysis by CysD. This chain is Sulfate adenylyltransferase subunit 1, found in Francisella tularensis subsp. tularensis (strain WY96-3418).